The sequence spans 237 residues: MRPSNRTPAQTRPITITRSFTAHAEGSVLVEFGDTKVLCTASFTEGVPRFLKGQGQGWVTAEYGMLPRSTHSRMDREAARGKQSGRTQEIQRLIGRALRAAVDMKLLGENTIVIDCDVIQADGGTRTAAITGACVALVDALNWARGKGIIKANPLKFLIAAVSVGIYKGEAISDLEYIEDSAAETDMNVVMTETGKIIEIQGTAEGEPFSHEELLELLVLAKNSIREIVDVQKAALS.

Residues Arg86 and 124–126 (GTR) contribute to the phosphate site.

Belongs to the RNase PH family. In terms of assembly, homohexameric ring arranged as a trimer of dimers.

The enzyme catalyses tRNA(n+1) + phosphate = tRNA(n) + a ribonucleoside 5'-diphosphate. In terms of biological role, phosphorolytic 3'-5' exoribonuclease that plays an important role in tRNA 3'-end maturation. Removes nucleotide residues following the 3'-CCA terminus of tRNAs; can also add nucleotides to the ends of RNA molecules by using nucleoside diphosphates as substrates, but this may not be physiologically important. Probably plays a role in initiation of 16S rRNA degradation (leading to ribosome degradation) during starvation. In Shewanella frigidimarina (strain NCIMB 400), this protein is Ribonuclease PH.